A 321-amino-acid polypeptide reads, in one-letter code: MAKGLLIVNLGSPVSPETKDVRRYLREFLSDQNVITMPKALWQPILRGFILPFRSWRSATFYKHEWTQAGSPLIAYTQVTRDRLRERLPDWDVQMAMNYGGEYPIGETLQTMAARGDAPIVVIPLFPEYTQSTTKTILDKVAASGVKTVVIDRFYDHSDYQKILAQQIDDAYEAGAYDTVILSYHGIPTAMVRHGDPYQQECETTTAGVKQYLKKVPQTKVEMCYQSKFGPVPWLKPYLRNRLMELAALGKRNVLVATPSFVADCLETLEENNVQNYQTFRANGGKNFATVRPMNGCEPFCDFLAKLAKDKIAAEANHGKA.

Fe(2+)-binding residues include His185 and Glu267.

This sequence belongs to the ferrochelatase family.

Its subcellular location is the cytoplasm. It carries out the reaction Fe-coproporphyrin III + 2 H(+) = coproporphyrin III + Fe(2+). The protein operates within porphyrin-containing compound metabolism; protoheme biosynthesis. In terms of biological role, involved in coproporphyrin-dependent heme b biosynthesis. Catalyzes the insertion of ferrous iron into coproporphyrin III to form Fe-coproporphyrin III. The polypeptide is Coproporphyrin III ferrochelatase (Lacticaseibacillus casei (strain BL23) (Lactobacillus casei)).